The sequence spans 301 residues: 2-dehydropantoate 2-reductase (301 aa).

Residues 7-12 (GAGAIG), lysine 74, asparagine 99, and alanine 123 each bind NADP(+). Catalysis depends on lysine 179, which acts as the Proton donor. Residues lysine 179, asparagine 183, asparagine 187, asparagine 197, and 246-249 (NYNS) each bind substrate. Glutamate 261 serves as a coordination point for NADP(+).

The protein belongs to the ketopantoate reductase family.

The protein localises to the cytoplasm. The catalysed reaction is (R)-pantoate + NAD(+) = 2-dehydropantoate + NADH + H(+). It carries out the reaction (R)-pantoate + NADP(+) = 2-dehydropantoate + NADPH + H(+). It participates in cofactor biosynthesis; coenzyme A biosynthesis. Its function is as follows. Catalyzes the NAD(P)H-dependent reduction of ketopantoate into pantoic acid. In Pyrococcus horikoshii (strain ATCC 700860 / DSM 12428 / JCM 9974 / NBRC 100139 / OT-3), this protein is 2-dehydropantoate 2-reductase.